The primary structure comprises 149 residues: Transcriptional repressor NrdR (149 aa).

Residues 3 to 34 (CPFCAAVDTKVIDSRLVGDGSQVRRRRQCLVC) fold into a zinc finger. In terms of domain architecture, ATP-cone spans 49 to 139 (PRVIKSDEVR…VYRSFEDIRE (91 aa)).

The protein belongs to the NrdR family. Requires Zn(2+) as cofactor.

Functionally, negatively regulates transcription of bacterial ribonucleotide reductase nrd genes and operons by binding to NrdR-boxes. In Serratia proteamaculans (strain 568), this protein is Transcriptional repressor NrdR.